We begin with the raw amino-acid sequence, 857 residues long: Bifunctional levopimaradiene synthase, chloroplastic (857 aa).

The transit peptide at 1–33 (MALPSSSLSSQIHTGATTQCIPHFHGSLNAGTS) directs the protein to the chloroplast. Lys-257 provides a ligand contact to substrate. Mg(2+)-binding residues include Asp-390 and Asp-392. A DXDD motif motif is present at residues 390–393 (DIDD). Residue Lys-477 participates in substrate binding. Asp-609, Asp-613, Asn-753, Thr-757, and Glu-761 together coordinate Mg(2+). A DDXXD motif motif is present at residues 609-613 (DDLYD).

The protein belongs to the terpene synthase family. Tpsd subfamily. Mg(2+) serves as cofactor.

It is found in the plastid. Its subcellular location is the chloroplast. It catalyses the reaction (2E,6E,10E)-geranylgeranyl diphosphate = (+)-copalyl diphosphate. The catalysed reaction is (+)-copalyl diphosphate = abieta-7,13-diene + diphosphate. It carries out the reaction (+)-copalyl diphosphate = abieta-8(14),12-diene + diphosphate. The enzyme catalyses (+)-copalyl diphosphate = neoabietadiene + diphosphate. Its pathway is terpene metabolism; oleoresin biosynthesis. Functionally, involved in defensive oleoresin formation in conifers in response to insect attack or other injury. Involved in diterpene (C20) olefins biosynthesis. Bifunctional enzyme that catalyzes two sequential cyclizations of geranylgeranyl diphosphate (GGPP) to levopimaradiene. Levopimaradiene is the major products of the enzyme with abietadiene and neoabietadiene. No activity with farnesyl diphosphate (FPP) as substrate. The chain is Bifunctional levopimaradiene synthase, chloroplastic from Pinus banksiana (Jack pine).